The chain runs to 78 residues: Small ribosomal subunit protein eS17 (78 aa).

This sequence belongs to the eukaryotic ribosomal protein eS17 family.

The protein is Small ribosomal subunit protein eS17 of Sulfurisphaera tokodaii (strain DSM 16993 / JCM 10545 / NBRC 100140 / 7) (Sulfolobus tokodaii).